The chain runs to 64 residues: Enteric beta-defensin (64 aa).

A signal peptide spans 1-26 (MRLHHLLLTLLFLVLSAGSGFTQGIS). 3 disulfide bridges follow: C31/C60, C38/C53, and C43/C61.

Belongs to the beta-defensin family. LAP/TAP subfamily. Inducibly expressed in enteric epithelial cells.

The protein resides in the secreted. Its function is as follows. Has antibacterial activity. The polypeptide is Enteric beta-defensin (EBD) (Bos taurus (Bovine)).